The sequence spans 256 residues: uncharacterized protein (256 aa).

An S4 RNA-binding domain is found at 16-83; that stretch reads VRLQKILSRA…DSLVYLALNK (68 aa). The active-site Nucleophile is Asp-121.

The protein belongs to the pseudouridine synthase RsuA family.

The catalysed reaction is a uridine in RNA = a pseudouridine in RNA. This is an uncharacterized protein from Mycobacterium leprae (strain TN).